A 197-amino-acid polypeptide reads, in one-letter code: MARLLFRLLVESNTPSPAIDNSTAALNSDLVVILAALLCALICVLGLIAVSRCVWLRRLAAGNRTVSGSQTQSPQPPVAAANKGLKKKVLQSLPKLTFSPESPESEKFAECAICLAEFSAGDELRVLPQCGHGFHVACIDTWLGSHSSCPSCRQILVVARCHKCGGLPGSSSSGLESEPEIEIRIKQGEDDPNSFLP.

A helical membrane pass occupies residues 30-50 (LVVILAALLCALICVLGLIAV). Residues 111 to 153 (CAICLAEFSAGDELRVLPQCGHGFHVACIDTWLGSHSSCPSCR) form an RING-type; atypical zinc finger. Residues 168-197 (PGSSSSGLESEPEIEIRIKQGEDDPNSFLP) form a disordered region.

The protein belongs to the RING-type zinc finger family. ATL subfamily.

It is found in the membrane. The enzyme catalyses S-ubiquitinyl-[E2 ubiquitin-conjugating enzyme]-L-cysteine + [acceptor protein]-L-lysine = [E2 ubiquitin-conjugating enzyme]-L-cysteine + N(6)-ubiquitinyl-[acceptor protein]-L-lysine.. It participates in protein modification; protein ubiquitination. In terms of biological role, may be involved in the early steps of the plant defense signaling pathway. The polypeptide is RING-H2 finger protein ATL80 (ATL80) (Arabidopsis thaliana (Mouse-ear cress)).